A 1088-amino-acid chain; its full sequence is Insulin receptor substrate 1-B (1088 aa).

One can recognise a PH domain in the interval 15–117 (DVRKVGYLRK…WYQALVDLHN (103 aa)). Tyr48 carries the phosphotyrosine modification. In terms of domain architecture, IRS-type PTB spans 155-259 (FKEVWQVIMK…EAMKALSDEF (105 aa)). The disordered stretch occupies residues 259–428 (FRPRSKSQSS…GGFISSDEYG (170 aa)). Composition is skewed to low complexity over residues 264–278 (KSQS…ISVP), 302–312 (SATATSPAGGA), 379–400 (SPSA…GSTS), and 408–420 (SSAS…SDGG). Position 307 is a phosphoserine (Ser307). Tyr460 carries the post-translational modification Phosphotyrosine; by INSR. The YXXM motif 1 signature appears at 460–463 (YICM). Polar residues-rich tracts occupy residues 466–479 (SSSH…QRYQ) and 499–516 (SSGT…PSQS). Disordered stretches follow at residues 466–485 (SSSH…RGEE) and 496–516 (RTHS…PSQS). 5 short sequence motifs (YXXM motif) span residues 521–524 (YTEM), 567–570 (YMPM), 584–587 (YMPM), 612–615 (YMMM), and 654–657 (YINM). Tyr567 and Tyr584 each carry phosphotyrosine; by INSR. Tyr612 bears the Phosphotyrosine mark. The segment at 704–785 (NLRISANSGH…PPEPKSPGEY (82 aa)) is disordered. A compositionally biased stretch (polar residues) spans 707–718 (ISANSGHNLYTE). A compositionally biased stretch (low complexity) spans 719–729 (DSSSSSTSSDS). 2 positions are modified to phosphotyrosine; by INSR: Tyr785 and Tyr823. A GRB2-binding region spans residues 785–787 (YVN). Positions 823 to 826 (YMNM) match the YXXM motif 7 motif. The segment covering 840–863 (TSSYEPPNKPVNSVCPTETCSSSR) has biased composition (polar residues). A disordered region spans residues 840-868 (TSSYEPPNKPVNSVCPTETCSSSRPPIRG). The residue at position 875 (Tyr875) is a Phosphotyrosine; by INSR. 2 consecutive short sequence motifs (YXXM motif) follow at residues 875 to 878 (YMSM) and 909 to 912 (YAEM). The interval 935 to 1006 (ASRSSLLGQG…SGEDVKRHSS (72 aa)) is disordered. 2 stretches are compositionally biased toward polar residues: residues 946–961 (GPSA…NRNP) and 980–995 (ETFS…TTGP). Phosphotyrosine; by INSR occurs at positions 1037 and 1069.

Interacts with the NPXY motif of tyrosine-phosphorylated igf1r and insr via the PTB domain. Binds to phosphatidylinositol 3-kinase p85 subunit at a low level in vitro prior to phosphorylation. Binding is greatly enhanced following tyrosine phosphorylation by insr and probably occurs via the phosphorylated YXXM motifs. Post-translationally, phosphorylation of Tyr-785 is required for grb2-binding.

Its function is as follows. May mediate the control of various cellular processes by insulin. When phosphorylated by the insulin receptor binds specifically to various cellular proteins containing SH2 domains such as phosphatidylinositol 3-kinase p85 subunit or grb2. Activates phosphatidylinositol 3-kinase when bound to the regulatory p85 subunit. This Xenopus laevis (African clawed frog) protein is Insulin receptor substrate 1-B (irs1-b).